The chain runs to 508 residues: DNA-directed RNA polymerase subunit Rpo1C (508 aa).

The tract at residues 1–123 (MIIWKDTAKN…REKYEYEKKV (123 aa)) is unknown. A DNA-directed RNA polymerase subunit Rpo1C region spans residues 124–508 (SSQVLDVIAE…IYKGYPKTKK (385 aa)).

It belongs to the RNA polymerase beta' chain family. In terms of assembly, part of the RNA polymerase complex.

It localises to the cytoplasm. The catalysed reaction is RNA(n) + a ribonucleoside 5'-triphosphate = RNA(n+1) + diphosphate. Its function is as follows. DNA-dependent RNA polymerase (RNAP) catalyzes the transcription of DNA into RNA using the four ribonucleoside triphosphates as substrates. Forms part of the jaw domain. This is DNA-directed RNA polymerase subunit Rpo1C from Thermoplasma volcanium (strain ATCC 51530 / DSM 4299 / JCM 9571 / NBRC 15438 / GSS1).